The chain runs to 20 residues: Protein PR-L5 (20 aa).

This sequence belongs to the BetVI family.

This chain is Protein PR-L5, found in Lupinus luteus (European yellow lupine).